The primary structure comprises 192 residues: Pyridoxal 5'-phosphate synthase subunit PdxT (192 aa).

50-52 (GES) serves as a coordination point for L-glutamine. The Nucleophile role is filled by C82. Residues R109 and 136-137 (IR) contribute to the L-glutamine site. Catalysis depends on charge relay system residues H172 and E174.

The protein belongs to the glutaminase PdxT/SNO family. In terms of assembly, in the presence of PdxS, forms a dodecamer of heterodimers. Only shows activity in the heterodimer.

It carries out the reaction aldehydo-D-ribose 5-phosphate + D-glyceraldehyde 3-phosphate + L-glutamine = pyridoxal 5'-phosphate + L-glutamate + phosphate + 3 H2O + H(+). The enzyme catalyses L-glutamine + H2O = L-glutamate + NH4(+). It participates in cofactor biosynthesis; pyridoxal 5'-phosphate biosynthesis. Functionally, catalyzes the hydrolysis of glutamine to glutamate and ammonia as part of the biosynthesis of pyridoxal 5'-phosphate. The resulting ammonia molecule is channeled to the active site of PdxS. The protein is Pyridoxal 5'-phosphate synthase subunit PdxT of Haemophilus influenzae (strain PittEE).